The primary structure comprises 961 residues: MVELNNCSNSEENGCVDSLEVRFTDFCKNGLSMGESFVTEATKLFNDSKHLLLSNNSTIGVITEGVERYWFVFVLYSVKRLSEKEVGNSSNGNEGNAFSLCQILRGAKLNVVDFFKELPQFILKVGPTLSNLYGSDWEKRLEAKELQTNFVHLSLLSKYYKRAYQELFLASGNNEDKPSATSSSAIHLPQYYRFGWLLFLSLRIHVFSRFKDLVTCTNGLVSVLAILIIHVPVRFRNFNINDSSRFVKKGDKVDLLASLGKIYQTSIDDLRETMDKVNYLITEKLKKKPCLASEFRTENLDNLDTDGLTYFEDLMEESCLPSSVSILEKDYSDAIQNKGELDERIFVNEEDSLLGSGSLSGGVVNMNGVKRKFDAMASPAKTVTSTLSPYRSPNCANSKMTVATPVSTAMTTARWLRTVIAPLQPKPSAELERFLSSCDRDVTADVIRRAQIILEAIFPSSGPAEHCAAGGSLQSTSLMDNIWAEQRTSEALKLYYRVLQTMCTAESQILNGNNLTSLLTNERFHRCMLACSAELVLATHKTVTMLFPAVLERTGITAFDLSKVIESFIRHEESLPRELRRHLNSLEERLLESMVWEKGSSMYNSLAVAKPSLAAEINRTGLLAEPMPSLDAIAMHINLSSGSLPPLPSLHKNNLAPNGQIGDIRSPKKVCSEYRSVLVERNSFTSPVKDRFLALNNIKSKFPPPALQSAFASPTRPNPGGGGETCAETAINVFFGKIVKLAAVRINGMIERLQLSQQIRETVYCLFQKILSQRTSLFFNRHIDQIILCSFYGVAKRTGADHVDIITFYNEMFIPSVKPLLVELAPAGNAEKNNHNDGQGPASPKPSPFPKLPDMSPKKVSAVHNVYVSPLRASKMDALISHSSKSYYACVGESTHAYQSPSKDLDVINNRLNGNRKLRGALNFDVDAGLVSDSIVANSLYLQNGNCRSPVAHVKTEQPES.

Residues 404 to 606 (TPVSTAMTTA…EKGSSMYNSL (203 aa)) form a domain A region. The pocket stretch occupies residues 404 to 819 (TPVSTAMTTA…NEMFIPSVKP (416 aa)). The interval 607 to 728 (AVAKPSLAAE…PGGGGETCAE (122 aa)) is spacer. Positions 729 to 819 (TAINVFFGKI…NEMFIPSVKP (91 aa)) are domain B. The disordered stretch occupies residues 829–856 (NAEKNNHNDGQGPASPKPSPFPKLPDMS).

Belongs to the retinoblastoma protein (RB) family.

The protein localises to the nucleus. Its function is as follows. Regulator of biological processes that recruits a histone deacetylase to control gene transcription. May play a role in the entry into mitosis, negatively regulating the cell proliferation. Formation of stable complexes with geminiviridae replication-associated proteins may create a cellular environment which favors viral DNA replication. The protein is Retinoblastoma-related protein 1 (RB1) of Nicotiana tabacum (Common tobacco).